Reading from the N-terminus, the 280-residue chain is UPF0276 protein CC_3255 (280 aa).

It belongs to the UPF0276 family.

In Caulobacter vibrioides (strain ATCC 19089 / CIP 103742 / CB 15) (Caulobacter crescentus), this protein is UPF0276 protein CC_3255.